The chain runs to 673 residues: DNA ligase (673 aa).

Residues 33 to 37 (DYEYD), 82 to 83 (SL), and Glu113 each bind NAD(+). Catalysis depends on Lys115, which acts as the N6-AMP-lysine intermediate. 4 residues coordinate NAD(+): Arg136, Glu170, Lys285, and Lys309. Positions 403, 406, 421, and 426 each coordinate Zn(2+). The 90-residue stretch at 583 to 672 (AKSDILKGYT…SREEAEKILM (90 aa)) folds into the BRCT domain.

This sequence belongs to the NAD-dependent DNA ligase family. LigA subfamily. It depends on Mg(2+) as a cofactor. Mn(2+) serves as cofactor.

It carries out the reaction NAD(+) + (deoxyribonucleotide)n-3'-hydroxyl + 5'-phospho-(deoxyribonucleotide)m = (deoxyribonucleotide)n+m + AMP + beta-nicotinamide D-nucleotide.. DNA ligase that catalyzes the formation of phosphodiester linkages between 5'-phosphoryl and 3'-hydroxyl groups in double-stranded DNA using NAD as a coenzyme and as the energy source for the reaction. It is essential for DNA replication and repair of damaged DNA. This chain is DNA ligase, found in Caldicellulosiruptor bescii (strain ATCC BAA-1888 / DSM 6725 / KCTC 15123 / Z-1320) (Anaerocellum thermophilum).